A 366-amino-acid polypeptide reads, in one-letter code: Flagellar P-ring protein (366 aa).

Positions 1–20 (MVIKFLSALILLLVTTAAQA) are cleaved as a signal peptide.

Belongs to the FlgI family. As to quaternary structure, the basal body constitutes a major portion of the flagellar organelle and consists of four rings (L,P,S, and M) mounted on a central rod.

The protein resides in the periplasm. It is found in the bacterial flagellum basal body. Its function is as follows. Assembles around the rod to form the L-ring and probably protects the motor/basal body from shearing forces during rotation. This is Flagellar P-ring protein from Escherichia coli (strain UTI89 / UPEC).